Here is a 268-residue protein sequence, read N- to C-terminus: Nuclear protein UL4 homolog (268 aa).

It belongs to the alphaherpesvirinae HHV-1 UL4 family.

The protein resides in the host nucleus. The polypeptide is Nuclear protein UL4 homolog (MDV016) (Gallid herpesvirus 2 (strain Chicken/Md5/ATCC VR-987) (GaHV-2)).